A 200-amino-acid polypeptide reads, in one-letter code: Late embryogenesis abundant protein 19 (200 aa).

Disordered regions lie at residues 1-145 (MASH…KTGS) and 172-200 (TEDE…ARDH). Basic and acidic residues-rich tracts occupy residues 13 to 23 (GETKAHTEEKA), 30 to 42 (SKDK…DRAS), 53 to 81 (QDTK…KDKT), 88 to 97 (ARDKAAESKD), and 105 to 114 (EKTEQAKQKA). Residues 52–81 (GQDTKEATKEKAQAAKERASETAQAAKDKT) are a coiled coil. 2 stretches are compositionally biased toward low complexity: residues 115–130 (AETA…ETAQ) and 186–200 (TSAT…ARDH).

This sequence belongs to the LEA type 4 family.

Functionally, involved in response to stress. The protein is Late embryogenesis abundant protein 19 of Oryza sativa subsp. japonica (Rice).